Here is a 457-residue protein sequence, read N- to C-terminus: Multidrug resistance protein MdtK (457 aa).

Transmembrane regions (helical) follow at residues 11 to 31, 46 to 66, 93 to 113, 127 to 147, 160 to 180, 188 to 208, 243 to 263, 278 to 300, 316 to 336, 350 to 370, 387 to 407, and 418 to 438; these read LLALAIPVVIAQLSQTAMGVV, AVAVGTSIWLPAILFGHGLLL, WLAFCVSVLIMVVIYNSDHII, AVGFLHAIMWGAPGYLFFQVL, GMVIGFIGLLVNIPINYIFIY, LGGVGCGVATGTVYWVMFLMM, LPVALALFFEVTLFAVVALLV, LNFSSLMFMLPMSLSVAATIRVG, YTSIAVGLMLACVTAIFTVVF, VVVMASHLMLLAALYQLSDAI, IFFITFTAYWLLGLPSGYLLG, and PSGFWIGFVIGLTSAAILMAL.

This sequence belongs to the multi antimicrobial extrusion (MATE) (TC 2.A.66.1) family. MdtK subfamily.

The protein localises to the cell inner membrane. Multidrug efflux pump that functions probably as a Na(+)/drug antiporter. This Yersinia enterocolitica serotype O:8 / biotype 1B (strain NCTC 13174 / 8081) protein is Multidrug resistance protein MdtK.